We begin with the raw amino-acid sequence, 149 residues long: Sec-independent protein translocase protein TatB (149 aa).

Residues 1–21 (MFDIGFTELIVIGIVALVVVG) traverse the membrane as a helical segment. The disordered stretch occupies residues 92–149 (VDMLDKSVRNEPQNAQTPPQTADAEPAQPDVRQQTLPLEEPDQNRAAGEPSSTSTRPA). Over residues 101 to 111 (NEPQNAQTPPQ) the composition is skewed to polar residues.

The protein belongs to the TatB family. As to quaternary structure, the Tat system comprises two distinct complexes: a TatABC complex, containing multiple copies of TatA, TatB and TatC subunits, and a separate TatA complex, containing only TatA subunits. Substrates initially bind to the TatABC complex, which probably triggers association of the separate TatA complex to form the active translocon.

The protein localises to the cell inner membrane. Part of the twin-arginine translocation (Tat) system that transports large folded proteins containing a characteristic twin-arginine motif in their signal peptide across membranes. Together with TatC, TatB is part of a receptor directly interacting with Tat signal peptides. TatB may form an oligomeric binding site that transiently accommodates folded Tat precursor proteins before their translocation. This is Sec-independent protein translocase protein TatB from Thiobacillus denitrificans (strain ATCC 25259 / T1).